Reading from the N-terminus, the 273-residue chain is Shikimate kinase (273 aa).

An ATP-binding site is contributed by 85-95 (PVGKGLKSSSA).

Belongs to the GHMP kinase family. Archaeal shikimate kinase subfamily.

It is found in the cytoplasm. The catalysed reaction is shikimate + ATP = 3-phosphoshikimate + ADP + H(+). Its pathway is metabolic intermediate biosynthesis; chorismate biosynthesis; chorismate from D-erythrose 4-phosphate and phosphoenolpyruvate: step 5/7. This is Shikimate kinase from Pyrococcus furiosus (strain ATCC 43587 / DSM 3638 / JCM 8422 / Vc1).